Here is a 250-residue protein sequence, read N- to C-terminus: Methionine aminopeptidase (250 aa).

H77 lines the substrate pocket. Residues D94, D105, and H169 each contribute to the a divalent metal cation site. H176 contacts substrate. A divalent metal cation contacts are provided by E202 and E235.

The protein belongs to the peptidase M24A family. Methionine aminopeptidase type 1 subfamily. As to quaternary structure, monomer. Co(2+) serves as cofactor. It depends on Zn(2+) as a cofactor. Mn(2+) is required as a cofactor. The cofactor is Fe(2+).

The enzyme catalyses Release of N-terminal amino acids, preferentially methionine, from peptides and arylamides.. Functionally, removes the N-terminal methionine from nascent proteins. The N-terminal methionine is often cleaved when the second residue in the primary sequence is small and uncharged (Met-Ala-, Cys, Gly, Pro, Ser, Thr, or Val). Requires deformylation of the N(alpha)-formylated initiator methionine before it can be hydrolyzed. The polypeptide is Methionine aminopeptidase (Mycoplasmoides gallisepticum (strain R(low / passage 15 / clone 2)) (Mycoplasma gallisepticum)).